A 327-amino-acid chain; its full sequence is Interleukin-12 subunit beta (327 aa).

The N-terminal stretch at 1–22 (MCLQQLVISWVSLVWLASPLLA) is a signal peptide. An Ig-like C2-type domain is found at 23 to 106 (IWELEKNVYV…LSQMLLLLHK (84 aa)). A disulfide bridge connects residues C50 and C90. N-linked (GlcNAc...) asparagine glycosylation is found at N134 and N152. Residues 237-327 (PPKNLKMKPS…WSEWATMSCP (91 aa)) form the Fibronectin type-III domain.

This sequence belongs to the IL-12B family. In terms of assembly, heterodimer with IL12A; disulfide-linked. The heterodimer is known as interleukin IL-12. Heterodimer with IL23A; disulfide-linked. The heterodimer is known as interleukin IL-23. Also secreted as a monomer. Interacts with NBR1; this interaction promotes IL-12 secretion.

It localises to the secreted. In terms of biological role, cytokine that can act as a growth factor for activated T and NK cells, enhance the lytic activity of NK/lymphokine-activated killer cells, and stimulate the production of IFN-gamma by resting PBMC. Associates with IL23A to form the IL-23 interleukin, a heterodimeric cytokine which functions in innate and adaptive immunity. IL-23 may constitute with IL-17 an acute response to infection in peripheral tissues. IL-23 binds to a heterodimeric receptor complex composed of IL12RB1 and IL23R, activates the Jak-Stat signaling cascade, stimulates memory rather than naive T-cells and promotes production of pro-inflammatory cytokines. IL-23 induces autoimmune inflammation and thus may be responsible for autoimmune inflammatory diseases and may be important for tumorigenesis. The protein is Interleukin-12 subunit beta (IL12B) of Marmota monax (Woodchuck).